Reading from the N-terminus, the 157-residue chain is 6,7-dimethyl-8-ribityllumazine synthase (157 aa).

Residues Phe-22, 57-59 (AYE), and 81-83 (TVI) each bind 5-amino-6-(D-ribitylamino)uracil. Residue 86 to 87 (GT) participates in (2S)-2-hydroxy-3-oxobutyl phosphate binding. His-89 (proton donor) is an active-site residue. Phe-114 lines the 5-amino-6-(D-ribitylamino)uracil pocket. Arg-128 is a binding site for (2S)-2-hydroxy-3-oxobutyl phosphate.

The protein belongs to the DMRL synthase family. As to quaternary structure, forms an icosahedral capsid composed of 60 subunits, arranged as a dodecamer of pentamers.

The catalysed reaction is (2S)-2-hydroxy-3-oxobutyl phosphate + 5-amino-6-(D-ribitylamino)uracil = 6,7-dimethyl-8-(1-D-ribityl)lumazine + phosphate + 2 H2O + H(+). The protein operates within cofactor biosynthesis; riboflavin biosynthesis; riboflavin from 2-hydroxy-3-oxobutyl phosphate and 5-amino-6-(D-ribitylamino)uracil: step 1/2. In terms of biological role, catalyzes the formation of 6,7-dimethyl-8-ribityllumazine by condensation of 5-amino-6-(D-ribitylamino)uracil with 3,4-dihydroxy-2-butanone 4-phosphate. This is the penultimate step in the biosynthesis of riboflavin. This Histophilus somni (strain 129Pt) (Haemophilus somnus) protein is 6,7-dimethyl-8-ribityllumazine synthase.